The sequence spans 149 residues: Large ribosomal subunit protein bL9 (149 aa).

It belongs to the bacterial ribosomal protein bL9 family.

In terms of biological role, binds to the 23S rRNA. This Salinibacter ruber (strain DSM 13855 / M31) protein is Large ribosomal subunit protein bL9.